A 102-amino-acid polypeptide reads, in one-letter code: Small ribosomal subunit protein uS10 (102 aa).

This sequence belongs to the universal ribosomal protein uS10 family. As to quaternary structure, part of the 30S ribosomal subunit.

Functionally, involved in the binding of tRNA to the ribosomes. The sequence is that of Small ribosomal subunit protein uS10 from Malacoplasma penetrans (strain HF-2) (Mycoplasma penetrans).